Reading from the N-terminus, the 200-residue chain is Interleukin 17-like protein (200 aa).

A signal peptide spans 1–26 (MGNFFLFAMTLVVCSVIVLLTGVADS). The N-linked (GlcNAc...) asparagine glycan is linked to N46. Disulfide bonds link C122/C175 and C127/C177. N192 is a glycosylation site (N-linked (GlcNAc...) asparagine).

This sequence belongs to the IL-17 family. In terms of tissue distribution, expressed in several tissues including hemocytes, gills, mantle, adductor muscle, labial palps, digestive glands and heart with highest levels in gills and lowest levels in adductor muscle and heart.

It is found in the secreted. This chain is Interleukin 17-like protein, found in Magallana gigas (Pacific oyster).